The chain runs to 160 residues: Large ribosomal subunit protein uL22c (160 aa).

It belongs to the universal ribosomal protein uL22 family. Part of the 50S ribosomal subunit.

The protein localises to the plastid. Its subcellular location is the chloroplast. In terms of biological role, this protein binds specifically to 23S rRNA. Functionally, the globular domain of the protein is located near the polypeptide exit tunnel on the outside of the subunit, while an extended beta-hairpin is found that lines the wall of the exit tunnel in the center of the 70S ribosome. The polypeptide is Large ribosomal subunit protein uL22c (rpl22) (Aethionema cordifolium (Lebanon stonecress)).